The sequence spans 660 residues: UvrABC system protein B (660 aa).

Residues 26–413 (AGINEGKKHQ…TPEMVEQIIR (388 aa)) enclose the Helicase ATP-binding domain. 39-46 (GATGTGKT) is a binding site for ATP. The Beta-hairpin motif lies at 92–115 (YYDYYQPEAYVPQSDTYIEKDASI). The 163-residue stretch at 430–592 (QIDDLIGEIN…ITPKTIEKRI (163 aa)) folds into the Helicase C-terminal domain. One can recognise a UVR domain in the interval 624 to 659 (EAVIERMEAEMKEAAKTLNFERAAELRDLILELKAE).

This sequence belongs to the UvrB family. In terms of assembly, forms a heterotetramer with UvrA during the search for lesions. Interacts with UvrC in an incision complex.

Its subcellular location is the cytoplasm. In terms of biological role, the UvrABC repair system catalyzes the recognition and processing of DNA lesions. A damage recognition complex composed of 2 UvrA and 2 UvrB subunits scans DNA for abnormalities. Upon binding of the UvrA(2)B(2) complex to a putative damaged site, the DNA wraps around one UvrB monomer. DNA wrap is dependent on ATP binding by UvrB and probably causes local melting of the DNA helix, facilitating insertion of UvrB beta-hairpin between the DNA strands. Then UvrB probes one DNA strand for the presence of a lesion. If a lesion is found the UvrA subunits dissociate and the UvrB-DNA preincision complex is formed. This complex is subsequently bound by UvrC and the second UvrB is released. If no lesion is found, the DNA wraps around the other UvrB subunit that will check the other stand for damage. In Halalkalibacterium halodurans (strain ATCC BAA-125 / DSM 18197 / FERM 7344 / JCM 9153 / C-125) (Bacillus halodurans), this protein is UvrABC system protein B.